Here is a 247-residue protein sequence, read N- to C-terminus: MHTPVLFEHPLNEKMRTWLRIEFLIQQMAFHPMIATHADALHFFRNAGDLLDVLERGEVRTDLVKELERQQRKLQSWAEVPGVDQERINELRQQLKQSSSTLMAAPRIGQFLREDRLIALVRQRLSIPGGCCSFDLPTLHIWLHMPQAHRDEQVASWLASLDPLIQSLNLILDLIRNSALFRKQTSLNGFYQDNGEDADLLRLRLDLAHQLYPQISGHKSRFAIRFLPLDSEYGIVPERFDFELACC.

This sequence belongs to the ZapD family. Interacts with FtsZ.

It is found in the cytoplasm. Its function is as follows. Cell division factor that enhances FtsZ-ring assembly. Directly interacts with FtsZ and promotes bundling of FtsZ protofilaments, with a reduction in FtsZ GTPase activity. The sequence is that of Cell division protein ZapD from Klebsiella pneumoniae (strain 342).